Reading from the N-terminus, the 73-residue chain is Aminopeptidase G (73 aa).

A disordered region spans residues 39–73 (GRRAASSSWPGRGSSRRWRPGRRTGAAARGCWRAP). 2 stretches are compositionally biased toward low complexity: residues 42–51 (AASSSWPGRG) and 61–73 (RTGA…WRAP).

Belongs to the peptidase M1 family. Requires Zn(2+) as cofactor.

It localises to the cytoplasm. In terms of biological role, hydrolyzes preferentially the N-terminal glycine and can also hydrolyze other amino acids which are used by PepN but is unable to hydrolyze basic amino acids. In Streptomyces lividans, this protein is Aminopeptidase G (pepG).